Reading from the N-terminus, the 55-residue chain is Myrmicitoxin(1)-Pr6b (55 aa).

The N-terminal stretch at 1 to 22 is a signal peptide; that stretch reads MKIIYAFLLIAVVAFMGSGIMA. Positions 23–29 are excised as a propeptide; that stretch reads ESLAEAI.

This sequence belongs to the formicidae venom clade 4 family. In terms of tissue distribution, expressed by the venom gland.

Its subcellular location is the secreted. Functionally, probable neurotoxin. This Pogonomyrmex rugosus (Desert harvester ant) protein is Myrmicitoxin(1)-Pr6b.